Reading from the N-terminus, the 275-residue chain is Glutamate racemase (275 aa).

Substrate is bound by residues 10–11 and 42–43; these read DS and YG. C74 functions as the Proton donor/acceptor in the catalytic mechanism. 75 to 76 is a binding site for substrate; sequence NT. The active-site Proton donor/acceptor is the C189. Residue 190–191 coordinates substrate; the sequence is TH.

The protein belongs to the aspartate/glutamate racemases family.

The enzyme catalyses L-glutamate = D-glutamate. Its pathway is cell wall biogenesis; peptidoglycan biosynthesis. Provides the (R)-glutamate required for cell wall biosynthesis. This chain is Glutamate racemase, found in Bartonella tribocorum (strain CIP 105476 / IBS 506).